The chain runs to 440 residues: V-type ATP synthase beta chain (440 aa).

It belongs to the ATPase alpha/beta chains family.

In terms of biological role, produces ATP from ADP in the presence of a proton gradient across the membrane. The V-type beta chain is a regulatory subunit. In Geotalea uraniireducens (strain Rf4) (Geobacter uraniireducens), this protein is V-type ATP synthase beta chain.